A 230-amino-acid chain; its full sequence is Homeobox protein Hox-B5 (230 aa).

The interval 1-135 (GGGGGNVSGS…GAAGTDGQSP (135 aa)) is disordered. Over residues 49–65 (FPGQESSRFRANQNCPL) the composition is skewed to polar residues. The span at 87 to 103 (ATSSAHFTETEETSASS) shows a compositional bias: low complexity. Positions 137–142 (IFPWMR) match the Antp-type hexapeptide motif. The segment at residues 155–214 (GKRARTAYTRYQTLELEKEFHFNRYLTRRRRIEIAHTLCLSERQIKIWFQNRRMKWKKDN) is a DNA-binding region (homeobox).

The protein belongs to the Antp homeobox family.

The protein localises to the nucleus. Functionally, sequence-specific transcription factor which is part of a developmental regulatory system that provides cells with specific positional identities on the anterior-posterior axis. The protein is Homeobox protein Hox-B5 (hoxb5) of Xenopus laevis (African clawed frog).